We begin with the raw amino-acid sequence, 412 residues long: Arginine biosynthesis bifunctional protein ArgJ (412 aa).

Residues T162, K188, T199, E285, N407, and T412 each coordinate substrate. T199 acts as the Nucleophile in catalysis.

It belongs to the ArgJ family. Heterotetramer of two alpha and two beta chains.

The protein resides in the cytoplasm. The enzyme catalyses N(2)-acetyl-L-ornithine + L-glutamate = N-acetyl-L-glutamate + L-ornithine. It carries out the reaction L-glutamate + acetyl-CoA = N-acetyl-L-glutamate + CoA + H(+). Its pathway is amino-acid biosynthesis; L-arginine biosynthesis; L-ornithine and N-acetyl-L-glutamate from L-glutamate and N(2)-acetyl-L-ornithine (cyclic): step 1/1. It participates in amino-acid biosynthesis; L-arginine biosynthesis; N(2)-acetyl-L-ornithine from L-glutamate: step 1/4. Functionally, catalyzes two activities which are involved in the cyclic version of arginine biosynthesis: the synthesis of N-acetylglutamate from glutamate and acetyl-CoA as the acetyl donor, and of ornithine by transacetylation between N(2)-acetylornithine and glutamate. This Staphylococcus saprophyticus subsp. saprophyticus (strain ATCC 15305 / DSM 20229 / NCIMB 8711 / NCTC 7292 / S-41) protein is Arginine biosynthesis bifunctional protein ArgJ.